We begin with the raw amino-acid sequence, 25 residues long: LASP1 neighbor protein (25 aa).

A helical membrane pass occupies residues 4-24; the sequence is IFILMFFAIIGLVILSYIIYL.

The protein resides in the membrane. Its function is as follows. May play a key role in the skin fibroblasts (FBs)-keratinocyte-like cells (KLCs). This Homo sapiens (Human) protein is LASP1 neighbor protein.